The primary structure comprises 623 residues: MATTTPSRSTRSSMQSPARGTSTPLSPTRISRLQEKEELRHLNDRLAVYIDRVRALELENDRLMVKISEKEEVTTREVSGIKNLYESELADARKVLDETARERARLQIELGKFRSDLDELNKNYKKKDADLSTAQGRIKDLEALFHRSEAELGTALGEKRSLEAEVADLRAQLSKTEDAHRVAKKQLEKETLMRVDFENRMQSLQEEMDFRKNIYEEESRETRKRHERRIVEVDRGHHYDYESKLAQALDELRKQHDEQVKMYKEELEQTYQAKLDNIKRSSDHNDKAANTALEELTERRMRIETLGYQLSGLQKQANAAEERIRELEELLSSDRDKYRKLLDSKEREMAEMRDQMQQQLNEYQELLDVKLALDLEINAYRKLLEGEEERLKLSPSPESRVTVSRATSSSSSATRTSRSKRRRVEEEYEEGGASTGFGAGHSLGSSRITASEGSSRTITSGQSSTTRFHLSQQASATGSISIEEIDLEGKYVHLKNNSDKDQSLGNWRLKRKIGEEEEIVYKFTPKYVLKAGQSVKIYSADAGVAHSPPSILVWKNQSSWGTGSNIRTYLVNTEEEEVAVRTVTKSVLRNVEEEEDEDADFGEEDLFHQQGDPRTTSRGCSVM.

Residues 1–18 show a composition bias toward low complexity; sequence MATTTPSRSTRSSMQSPA. A disordered region spans residues 1–30; that stretch reads MATTTPSRSTRSSMQSPARGTSTPLSPTRI. The head stretch occupies residues 2 to 27; that stretch reads ATTTPSRSTRSSMQSPARGTSTPLSP. Positions 19 to 30 are enriched in polar residues; that stretch reads RGTSTPLSPTRI. Ser26 is modified (phosphoserine). The coil 1A stretch occupies residues 28 to 64; that stretch reads TRISRLQEKEELRHLNDRLAVYIDRVRALELENDRLM. The region spanning 35 to 391 is the IF rod domain; sequence EKEELRHLND…KLLEGEEERL (357 aa). The segment at 64-74 is linker 1; sequence MVKISEKEEVT. The interval 75 to 211 is coil 1B; the sequence is TREVSGIKNL…QSLQEEMDFR (137 aa). The tract at residues 212 to 235 is linker 2; that stretch reads KNIYEEESRETRKRHERRIVEVDR. Residues 236–378 are coil 2; the sequence is GHHYDYESKL…VKLALDLEIN (143 aa). The interval 380–592 is tail; it reads YRKLLEGEEE…VTKSVLRNVE (213 aa). Disordered stretches follow at residues 388–473 and 591–623; these read EERL…LSQQ and VEEE…CSVM. The residue at position 396 (Ser396) is a Phosphoserine. A compositionally biased stretch (low complexity) spans 398-416; that stretch reads ESRVTVSRATSSSSSATRT. Residues 420–425 carry the Nuclear localization signal motif; it reads KRRRVE. Residues 443 to 473 show a composition bias toward polar residues; that stretch reads LGSSRITASEGSSRTITSGQSSTTRFHLSQQ. The LTD domain maps to 468–585; it reads FHLSQQASAT…EEVAVRTVTK (118 aa). Residues 592 to 604 are compositionally biased toward acidic residues; that stretch reads EEEEDEDADFGEE. Polar residues predominate over residues 612–623; sequence DPRTTSRGCSVM. Cysteine methyl ester is present on Cys620. Cys620 carries S-farnesyl cysteine lipidation. The propeptide at 621-623 is removed in mature form; it reads SVM.

The protein belongs to the intermediate filament family. Post-translationally, phosphorylation plays a key role in lamin organization, subcellular localization and nuclear envelope disintegration. Phosphorylation by CDK1 at Ser-26 at the onset of mitosis drives lamin disassembly and nuclear envelope breakdown.

Its subcellular location is the nucleus lamina. The protein resides in the nucleus envelope. It is found in the nucleus. The protein localises to the nucleoplasm. It localises to the nucleus matrix. Lamins are intermediate filament proteins that assemble into a filamentous meshwork, and which constitute the major components of the nuclear lamina, a fibrous layer on the nucleoplasmic side of the inner nuclear membrane. Lamins provide a framework for the nuclear envelope, bridging the nuclear envelope and chromatin, thereby playing an important role in nuclear assembly, chromatin organization, nuclear membrane and telomere dynamics. The structural integrity of the lamina is strictly controlled by the cell cycle, as seen by the disintegration and formation of the nuclear envelope in prophase and telophase, respectively. The polypeptide is Lamin-B2.L (lmnb2.L) (Xenopus laevis (African clawed frog)).